Consider the following 992-residue polypeptide: P3N-PIPO polyprotein (992 aa).

The Peptidase S30 domain occupies 168 to 308 (TSQCRKPTYV…VENMEDIQHY (141 aa)). Active-site for P1 proteinase activity residues include His-221, Glu-230, and Ser-262. The Involved in interaction with stylet and aphid transmission signature appears at 361 to 364 (KLSC). The Involved in virions binding and aphid transmission motif lies at 617 to 619 (PTK). One can recognise a Peptidase C6 domain in the interval 643–765 (MYIAKEGFCY…QSEMKFYRVG (123 aa)). Residues Cys-651 and His-724 each act as for helper component proteinase activity in the active site.

Belongs to the potyviridae P3N-PIPO polyprotein family. In terms of assembly, interacts (via PIPO domain) with host PCaP1 protein; this interaction may help to anchor the movement complex to the plasma membrane from which the complex could move to the plasmodesmata. In terms of processing, potyviral RNA is expressed as two polyproteins which undergo post-translational proteolytic processing. Genome polyprotein is processed by NIa-pro, P1 and HC-pro proteinases resulting in the production of at least ten individual proteins. P3N-PIPO is cleaved by P1 and HC-pro proteinases resulting in the production of three individual proteins. The P1 proteinase and the HC-pro cleave only their respective C-termini autocatalytically.

Its subcellular location is the host cell junction. It is found in the host plasmodesma. It carries out the reaction Hydrolyzes a Gly-|-Gly bond at its own C-terminus, commonly in the sequence -Tyr-Xaa-Val-Gly-|-Gly, in the processing of the potyviral polyprotein.. Required for aphid transmission and also has proteolytic activity. Only cleaves a Gly-Gly dipeptide at its own C-terminus. Interacts with virions and aphid stylets. Acts as a suppressor of RNA-mediated gene silencing, also known as post-transcriptional gene silencing (PTGS), a mechanism of plant viral defense that limits the accumulation of viral RNAs. May have RNA-binding activity. Its function is as follows. Allows efficient cell to cell propagation, by bypassing the host cell wall barrier. Transports viral genome to neighboring plant cells directly through plasmosdesmata, without any budding. This Glycine max (Soybean) protein is P3N-PIPO polyprotein.